A 1640-amino-acid chain; its full sequence is Phospholipase D C (1640 aa).

The span at 122-132 (SHRSNQSFNHS) shows a compositional bias: polar residues. Disordered stretches follow at residues 122–247 (SHRS…KRLS), 264–283 (HNQNHQNHQNHQNHHHHTTT), 439–499 (EKQQ…YKYN), and 521–541 (DDEYYYGEYDDEDDSKPPSQE). Low complexity predominate over residues 133-193 (NSTTPLNTTN…YSSDNSYLHN (61 aa)). Over residues 197-231 (DIYEDEDDEDDEDDDDDEDEDDEGKEFEQDDEDES) the composition is skewed to acidic residues. Polar residues predominate over residues 232 to 247 (TISSMSLKNSQAKRLS). Composition is skewed to low complexity over residues 264 to 273 (HNQNHQNHQN) and 467 to 499 (TTTTATTNNNNNNNNNNNNNNNNNNNNNSYKYN). A compositionally biased stretch (acidic residues) spans 521 to 534 (DDEYYYGEYDDEDD). The PLD phosphodiesterase 1 domain maps to 1009–1036 (LYWSHHQKVVVVDQRIAFIGGLDLCFGR). Active-site residues include His-1014, Lys-1016, and Asp-1021. 2 stretches are compositionally biased toward low complexity: residues 1149–1274 (INNN…NNLN) and 1282–1296 (HNNSLPHQLNNQQQQ). The tract at residues 1149-1315 (INNNNNNANN…YQPPLPPQQR (167 aa)) is disordered. The segment covering 1297–1306 (QHHHHHHHHY) has biased composition (basic residues). The region spanning 1460-1487 (EQIYVHSKVLIVDDKIAIIGSANINDRS) is the PLD phosphodiesterase 2 domain. Residues His-1465, Lys-1467, and Asp-1472 contribute to the active site.

This sequence belongs to the phospholipase D family.

It carries out the reaction a 1,2-diacyl-sn-glycero-3-phosphocholine + H2O = a 1,2-diacyl-sn-glycero-3-phosphate + choline + H(+). With respect to regulation, inhibited by butan-1-ol. Plays a role in cell growth. Hydrolyzes membrane phospholipids, such as PtdCho (phosphatidylcholine), producing the free headgroup and PtdOH (phosphatidic acid; signaling molecule on its own). Involved in the inhibition of actin-based motility and endocytosis. Its inhibition causes complete collapse of F-actin organization. This chain is Phospholipase D C (pldC), found in Dictyostelium discoideum (Social amoeba).